A 332-amino-acid chain; its full sequence is L-lactate dehydrogenase A chain (332 aa).

NAD(+) is bound by residues 29 to 57 (GMVG…MEDK) and Arg-99. Arg-106, Asn-138, and Arg-169 together coordinate substrate. NAD(+) is bound at residue Asn-138. The Proton acceptor role is filled by His-193. Thr-248 contributes to the substrate binding site.

Belongs to the LDH/MDH superfamily. LDH family. In terms of assembly, homotetramer.

Its subcellular location is the cytoplasm. It carries out the reaction (S)-lactate + NAD(+) = pyruvate + NADH + H(+). It functions in the pathway fermentation; pyruvate fermentation to lactate; (S)-lactate from pyruvate: step 1/1. Its function is as follows. Interconverts simultaneously and stereospecifically pyruvate and lactate with concomitant interconversion of NADH and NAD(+). The sequence is that of L-lactate dehydrogenase A chain (ldha) from Eleginops maclovinus (Patagonian blennie).